The primary structure comprises 762 residues: 5-methyltetrahydropteroyltriglutamate--homocysteine methyltransferase (762 aa).

5-methyltetrahydropteroyltri-L-glutamate-binding positions include 17–20 (REWK) and K111. Residues 435-437 (IGS) and E488 contribute to the L-homocysteine site. L-methionine is bound by residues 435–437 (IGS) and E488. Residues 519-520 (RC) and W565 each bind 5-methyltetrahydropteroyltri-L-glutamate. D603 is an L-homocysteine binding site. D603 contributes to the L-methionine binding site. E609 serves as a coordination point for 5-methyltetrahydropteroyltri-L-glutamate. Zn(2+)-binding residues include H645, C647, and E669. H698 (proton donor) is an active-site residue. Position 730 (C730) interacts with Zn(2+).

Belongs to the vitamin-B12 independent methionine synthase family. The cofactor is Zn(2+).

It catalyses the reaction 5-methyltetrahydropteroyltri-L-glutamate + L-homocysteine = tetrahydropteroyltri-L-glutamate + L-methionine. It participates in amino-acid biosynthesis; L-methionine biosynthesis via de novo pathway; L-methionine from L-homocysteine (MetE route): step 1/1. Its function is as follows. Catalyzes the transfer of a methyl group from 5-methyltetrahydrofolate to homocysteine resulting in methionine formation. The sequence is that of 5-methyltetrahydropteroyltriglutamate--homocysteine methyltransferase from Bacillus cereus (strain ATCC 10987 / NRS 248).